Consider the following 378-residue polypeptide: MKILVDENMPYARELFSRLGEVKTVPGRPIPVEELNHADALMVRSVTKVNESLLSGTPIKFVGTATAGTDHVDEAWLKQEGIGFSAAPGCNAIAVVEYVFSALLMLAERDGFSLRDRTVGIVGVGNVGSRLQTRLEALGIRTLLCDPPRAARGDEGDFRTMDEVVEEADVLTFHTPLYKDGPYKTLHLVDETLIRRLKPGAILINACRGPVVDNAALLARLTAGQPISVVLDVWEGEPDLNVALLDAVDIGTSHIAGYTLEGKARGTTQVFEAYSAFIGREQHVALETLLPAPEFGRITLHGPLDQPTLKRLAHLVYDVRRDDAPLRKVAGIPGEFDKLRKNYLERREWSSLYVMCDDASAAALLQKLGFNAVHHPAR.

Ser-45 and Thr-66 together coordinate substrate. NAD(+) is bound by residues Asp-146 and Thr-175. The active site involves Arg-208. Asp-232 is a binding site for NAD(+). Glu-237 is a catalytic residue. The active-site Proton donor is His-254. Residue Gly-257 coordinates NAD(+). Tyr-258 is a binding site for substrate.

The protein belongs to the D-isomer specific 2-hydroxyacid dehydrogenase family. PdxB subfamily. In terms of assembly, homodimer.

The protein localises to the cytoplasm. The enzyme catalyses 4-phospho-D-erythronate + NAD(+) = (R)-3-hydroxy-2-oxo-4-phosphooxybutanoate + NADH + H(+). Its pathway is cofactor biosynthesis; pyridoxine 5'-phosphate biosynthesis; pyridoxine 5'-phosphate from D-erythrose 4-phosphate: step 2/5. Its function is as follows. Catalyzes the oxidation of erythronate-4-phosphate to 3-hydroxy-2-oxo-4-phosphonooxybutanoate. The chain is Erythronate-4-phosphate dehydrogenase from Salmonella arizonae (strain ATCC BAA-731 / CDC346-86 / RSK2980).